The chain runs to 979 residues: Disks large-associated protein 3 (979 aa).

A compositionally biased stretch (basic and acidic residues) spans 1 to 10; that stretch reads MRGYHGDRGS. Disordered stretches follow at residues 1–20, 52–95, 136–169, 182–291, 400–429, and 537–581; these read MRGYHGDRGSHPRPARFADQ, AGLG…MYPG, FHTLPYQRGPAGAGPGPAPGTGTAPEPRSESPSR, AKSH…CLEG, AMGDEESGDSDGSPKTSPKAVARRFTTRRS, and FRKA…RCSS. Serine 58 is subject to Phosphoserine. Gly residues predominate over residues 73 to 86; the sequence is PEGGPAGAGVGGGS. Basic and acidic residues predominate over residues 190–202; the sequence is PGKRDYNGPKAEG. Residues 203–218 are compositionally biased toward gly residues; that stretch reads RGGSGGDSYPGPGSGG. Basic residues predominate over residues 221 to 246; it reads TSHHHHHHHHHHHHQSRHGKRSKSKD. A phosphoserine mark is found at serine 406, serine 409, serine 412, and serine 416. Residues 540 to 549 show a composition bias toward pro residues; it reads APPPIPPGSQ. 2 positions are modified to phosphoserine: serine 643 and serine 645. Disordered stretches follow at residues 741–790 and 908–940; these read EGYP…RASP and EEKKVPPPIPKKPLRGRGVPVKERSLDSVDRQR. Composition is skewed to basic and acidic residues over residues 769–779 and 927–940; these read GRRDSWIERGS and PVKERSLDSVDRQR. Phosphoserine occurs at positions 932, 935, and 967.

It belongs to the SAPAP family. In terms of assembly, interacts with DLG4/PSD-95.

It localises to the cell membrane. It is found in the postsynaptic density. The protein localises to the synapse. May play a role in the molecular organization of synapses and neuronal cell signaling. Could be an adapter protein linking ion channel to the subsynaptic cytoskeleton. May induce enrichment of PSD-95/SAP90 at the plasma membrane. This Homo sapiens (Human) protein is Disks large-associated protein 3 (DLGAP3).